Here is a 195-residue protein sequence, read N- to C-terminus: Transcriptional regulator LdrP (195 aa).

An HTH crp-type domain is found at 110–182 (GELRARIARY…YRRVYLLDLA (73 aa)). A DNA-binding region (H-T-H motif) is located at residues 142–161 (HEEIADATASIRESVSKVLA).

As to quaternary structure, homodimer.

In terms of biological role, activates transcription. Positively regulates PcrtB promoter upstream of the crtB operon in a cAMP-independent manner. Regulated genes include genes encoding DNA photolyase, phytoene synthase and cytochrome P450 monooxygenase, which are involved in carotenoid biosynthesis. Positively regulates the light-inducible gene cluster in the megaplasmid in a cAMP-independent manner. The sequence is that of Transcriptional regulator LdrP from Thermus thermophilus (strain ATCC 27634 / DSM 579 / HB8).